Reading from the N-terminus, the 166-residue chain is ATP synthase subunit b (166 aa).

A helical membrane pass occupies residues 8–28 (FSFGLFFWQALILVILILLLV).

It belongs to the ATPase B chain family. As to quaternary structure, F-type ATPases have 2 components, F(1) - the catalytic core - and F(0) - the membrane proton channel. F(1) has five subunits: alpha(3), beta(3), gamma(1), delta(1), epsilon(1). F(0) has three main subunits: a(1), b(2) and c(10-14). The alpha and beta chains form an alternating ring which encloses part of the gamma chain. F(1) is attached to F(0) by a central stalk formed by the gamma and epsilon chains, while a peripheral stalk is formed by the delta and b chains.

The protein localises to the cell inner membrane. Functionally, f(1)F(0) ATP synthase produces ATP from ADP in the presence of a proton or sodium gradient. F-type ATPases consist of two structural domains, F(1) containing the extramembraneous catalytic core and F(0) containing the membrane proton channel, linked together by a central stalk and a peripheral stalk. During catalysis, ATP synthesis in the catalytic domain of F(1) is coupled via a rotary mechanism of the central stalk subunits to proton translocation. Component of the F(0) channel, it forms part of the peripheral stalk, linking F(1) to F(0). The polypeptide is ATP synthase subunit b (Flavobacterium johnsoniae (strain ATCC 17061 / DSM 2064 / JCM 8514 / BCRC 14874 / CCUG 350202 / NBRC 14942 / NCIMB 11054 / UW101) (Cytophaga johnsonae)).